The sequence spans 657 residues: Glycogen debranching enzyme (657 aa).

Asp-336 functions as the Nucleophile in the catalytic mechanism. The active-site Proton donor is the Glu-371. Residues 460-479 (ANGEENRDGTNNNYSNNHGK) are disordered.

The protein belongs to the glycosyl hydrolase 13 family.

The catalysed reaction is Hydrolysis of (1-&gt;6)-alpha-D-glucosidic linkages to branches with degrees of polymerization of three or four glucose residues in limit dextrin.. Its pathway is glycan degradation; glycogen degradation. Functionally, removes maltotriose and maltotetraose chains that are attached by 1,6-alpha-linkage to the limit dextrin main chain, generating a debranched limit dextrin. The protein is Glycogen debranching enzyme of Escherichia coli (strain SMS-3-5 / SECEC).